We begin with the raw amino-acid sequence, 80 residues long: Putative membrane protein insertion efficiency factor (80 aa).

This sequence belongs to the UPF0161 family.

It localises to the cell inner membrane. In terms of biological role, could be involved in insertion of integral membrane proteins into the membrane. This is Putative membrane protein insertion efficiency factor from Syntrophobacter fumaroxidans (strain DSM 10017 / MPOB).